The sequence spans 29 residues: YCQKFLWTCDTERKCCEDMVCELWCKYKE.

Intrachain disulfides connect cysteine 2/cysteine 16, cysteine 9/cysteine 21, and cysteine 15/cysteine 25.

It belongs to the neurotoxin 30 (phrixotoxin) family. As to expression, expressed by the venom gland.

Its subcellular location is the secreted. Functionally, insect-selective neurotoxin that potently blocks insect calcium-activated potassium (BKCa) channels (Slo-type) in cockroach dorsal unpaired median (DUM) neurons (IC(50)=25.3 nM). This occurs in the absence of any shifts in the voltage dependence of activation. May interact with the turret and/or loop region of the external entrance to the channel and does not project deeply into the pore of the channel. In vivo, does not show toxicity in mice after intracerebroventricular injection of up to 25 pmol/g (1.8 ug/20 g mouse). This chain is Lambda-theraphotoxin-Ec2b, found in Eucratoscelus constrictus (African red-rump baboon spider).